We begin with the raw amino-acid sequence, 376 residues long: Glutamate 5-kinase (376 aa).

ATP is bound at residue K15. Residues S56, D143, and N155 each contribute to the substrate site. 175 to 176 (SD) is a binding site for ATP. A PUA domain is found at 281 to 358 (KGTLTIDAGA…PDVMSILGIT (78 aa)).

Belongs to the glutamate 5-kinase family.

The protein resides in the cytoplasm. It catalyses the reaction L-glutamate + ATP = L-glutamyl 5-phosphate + ADP. It participates in amino-acid biosynthesis; L-proline biosynthesis; L-glutamate 5-semialdehyde from L-glutamate: step 1/2. Functionally, catalyzes the transfer of a phosphate group to glutamate to form L-glutamate 5-phosphate. This chain is Glutamate 5-kinase, found in Rhodopseudomonas palustris (strain BisB18).